We begin with the raw amino-acid sequence, 304 residues long: D-alanine--D-alanine ligase (304 aa).

Residues 100–301 enclose the ATP-grasp domain; sequence KLVALQSGIP…FGEFLEDLIK (202 aa). 129–184 is a binding site for ATP; the sequence is ERKLGSPFIVKPCDVGSTIGLSLVRSASEYEVALEEAFRFSDRLLLEEFIDGFEVT. Mg(2+) is bound by residues Asp-256, Glu-268, and Asn-270.

The protein belongs to the D-alanine--D-alanine ligase family. Mg(2+) is required as a cofactor. Requires Mn(2+) as cofactor.

The protein resides in the cytoplasm. It carries out the reaction 2 D-alanine + ATP = D-alanyl-D-alanine + ADP + phosphate + H(+). It functions in the pathway cell wall biogenesis; peptidoglycan biosynthesis. In terms of biological role, cell wall formation. The chain is D-alanine--D-alanine ligase from Coprothermobacter proteolyticus (strain ATCC 35245 / DSM 5265 / OCM 4 / BT).